A 42-amino-acid chain; its full sequence is Photosystem I reaction center subunit IX (42 aa).

Residues 7–27 form a helical membrane-spanning segment; the sequence is FLSSAPVLIMALLTFTAGILI.

It belongs to the PsaJ family.

The protein resides in the cellular thylakoid membrane. Functionally, may help in the organization of the PsaE and PsaF subunits. The chain is Photosystem I reaction center subunit IX from Microcystis aeruginosa (strain NIES-843 / IAM M-2473).